The following is a 493-amino-acid chain: Glutamate synthase [NADPH] small chain (493 aa).

299 to 313 contributes to the NADP(+) binding site; it reads GGGDTGADCVATALR.

Belongs to the glutamate synthase family. As to quaternary structure, aggregate of 4 catalytic active heterodimers, consisting of a large and a small subunit.

It catalyses the reaction 2 L-glutamate + NADP(+) = L-glutamine + 2-oxoglutarate + NADPH + H(+). It participates in amino-acid biosynthesis; L-glutamate biosynthesis via GLT pathway; L-glutamate from 2-oxoglutarate and L-glutamine (NADP(+) route): step 1/1. The protein operates within energy metabolism; nitrogen metabolism. In Bacillus subtilis (strain 168), this protein is Glutamate synthase [NADPH] small chain (gltB).